The following is a 160-amino-acid chain: Periplasmic nitrate reductase, electron transfer subunit (160 aa).

An N-terminal signal peptide occupies residues 1-25 (MKTRIIFAALALAAAMPLLVSGVFA). 8 residues coordinate heme c: His-73, Cys-87, Cys-90, His-91, His-108, Cys-127, Cys-130, and His-131.

This sequence belongs to the NapB family. Component of the periplasmic nitrate reductase NapAB complex composed of NapA and NapB. In terms of processing, binds 2 heme C groups per subunit.

It localises to the periplasm. Its function is as follows. Electron transfer subunit of the periplasmic nitrate reductase complex NapAB. Receives electrons from the membrane-anchored tetraheme c-type NapC protein and transfers these to NapA subunit, thus allowing electron flow between membrane and periplasm. Essential for periplasmic nitrate reduction with nitrate as the terminal electron acceptor. The polypeptide is Periplasmic nitrate reductase, electron transfer subunit (Azospirillum brasilense).